The primary structure comprises 430 residues: 3-phosphoshikimate 1-carboxyvinyltransferase (430 aa).

Residues Lys-23, Ser-24, and Arg-28 each coordinate 3-phosphoshikimate. Lys-23 lines the phosphoenolpyruvate pocket. Phosphoenolpyruvate is bound by residues Gly-95 and Arg-123. 3-phosphoshikimate-binding residues include Ser-169, Gln-171, Asp-315, and Lys-342. Phosphoenolpyruvate is bound at residue Gln-171. The Proton acceptor role is filled by Asp-315. 2 residues coordinate phosphoenolpyruvate: Arg-346 and Arg-388.

It belongs to the EPSP synthase family. As to quaternary structure, monomer.

The protein localises to the cytoplasm. It carries out the reaction 3-phosphoshikimate + phosphoenolpyruvate = 5-O-(1-carboxyvinyl)-3-phosphoshikimate + phosphate. It participates in metabolic intermediate biosynthesis; chorismate biosynthesis; chorismate from D-erythrose 4-phosphate and phosphoenolpyruvate: step 6/7. Functionally, catalyzes the transfer of the enolpyruvyl moiety of phosphoenolpyruvate (PEP) to the 5-hydroxyl of shikimate-3-phosphate (S3P) to produce enolpyruvyl shikimate-3-phosphate and inorganic phosphate. In Streptococcus pyogenes serotype M2 (strain MGAS10270), this protein is 3-phosphoshikimate 1-carboxyvinyltransferase.